The chain runs to 138 residues: Putative pre-16S rRNA nuclease (138 aa).

It belongs to the YqgF nuclease family.

It is found in the cytoplasm. Could be a nuclease involved in processing of the 5'-end of pre-16S rRNA. This is Putative pre-16S rRNA nuclease from Salmonella typhimurium (strain LT2 / SGSC1412 / ATCC 700720).